We begin with the raw amino-acid sequence, 862 residues long: Probable disease resistance protein At5g43740 (862 aa).

Residues 24–61 are a coiled coil; it reads RNYIHMMESNLDALQKTMEELKNGRDDLLGRVSIEEDK. The 304-residue stretch at 135–438 folds into the NB-ARC domain; sequence MVAQEIIHKV…CEGFINPNRY (304 aa). 178-185 contacts ATP; the sequence is GMGGVGKT. 4 LRR repeats span residues 511-532, 533-555, 558-580, and 582-604; these read IVRT…SKCP, NLST…FFRF, KLVV…ISNL, and SLQY…KKLR.

The protein belongs to the disease resistance NB-LRR family.

In terms of biological role, probable disease resistance protein. This Arabidopsis thaliana (Mouse-ear cress) protein is Probable disease resistance protein At5g43740.